The primary structure comprises 421 residues: Eukaryotic translation initiation factor 3 subunit E (421 aa).

The region spanning 215–394 is the PCI domain; the sequence is FFQNDTKGKD…STVILNHPSV (180 aa).

It belongs to the eIF-3 subunit E family. As to quaternary structure, component of the eukaryotic translation initiation factor 3 (eIF-3) complex.

The protein localises to the cytoplasm. Its function is as follows. Component of the eukaryotic translation initiation factor 3 (eIF-3) complex, which is involved in protein synthesis of a specialized repertoire of mRNAs and, together with other initiation factors, stimulates binding of mRNA and methionyl-tRNAi to the 40S ribosome. The eIF-3 complex specifically targets and initiates translation of a subset of mRNAs involved in cell proliferation. This Yarrowia lipolytica (strain CLIB 122 / E 150) (Yeast) protein is Eukaryotic translation initiation factor 3 subunit E.